The sequence spans 112 residues: Ribonuclease P protein component (112 aa).

The protein belongs to the RnpA family. In terms of assembly, consists of a catalytic RNA component (M1 or rnpB) and a protein subunit.

The catalysed reaction is Endonucleolytic cleavage of RNA, removing 5'-extranucleotides from tRNA precursor.. Functionally, RNaseP catalyzes the removal of the 5'-leader sequence from pre-tRNA to produce the mature 5'-terminus. It can also cleave other RNA substrates such as 4.5S RNA. The protein component plays an auxiliary but essential role in vivo by binding to the 5'-leader sequence and broadening the substrate specificity of the ribozyme. This is Ribonuclease P protein component from Mycoplasma mobile (strain ATCC 43663 / 163K / NCTC 11711) (Mesomycoplasma mobile).